We begin with the raw amino-acid sequence, 228 residues long: RNA chaperone ProQ (228 aa).

The segment at 105-178 is disordered; sequence EAKARVQAQR…REEQHTPVSD (74 aa). 2 stretches are compositionally biased toward basic and acidic residues: residues 117–136 and 146–173; these read QQAK…DAPR and RRKE…EEQH.

Belongs to the ProQ family.

The protein localises to the cytoplasm. Functionally, RNA chaperone with significant RNA binding, RNA strand exchange and RNA duplexing activities. May regulate ProP activity through an RNA-based, post-transcriptional mechanism. The protein is RNA chaperone ProQ of Citrobacter koseri (strain ATCC BAA-895 / CDC 4225-83 / SGSC4696).